Reading from the N-terminus, the 834-residue chain is DNA gyrase subunit A (834 aa).

Positions 34–500 (LPDIRDGLKP…ADDIRDIEDI (467 aa)) constitute a Topo IIA-type catalytic domain. Y122 (O-(5'-phospho-DNA)-tyrosine intermediate) is an active-site residue. A GyrA-box motif is present at residues 527-533 (QRRGGHG). The interval 810–834 (LSSNENDDEVLSGSEEECSDTVSLR) is disordered. The segment covering 814–828 (ENDDEVLSGSEEECS) has biased composition (acidic residues).

This sequence belongs to the type II topoisomerase GyrA/ParC subunit family. As to quaternary structure, heterotetramer, composed of two GyrA and two GyrB chains. In the heterotetramer, GyrA contains the active site tyrosine that forms a transient covalent intermediate with DNA, while GyrB binds cofactors and catalyzes ATP hydrolysis.

It is found in the cytoplasm. The catalysed reaction is ATP-dependent breakage, passage and rejoining of double-stranded DNA.. In terms of biological role, a type II topoisomerase that negatively supercoils closed circular double-stranded (ds) DNA in an ATP-dependent manner to modulate DNA topology and maintain chromosomes in an underwound state. Negative supercoiling favors strand separation, and DNA replication, transcription, recombination and repair, all of which involve strand separation. Also able to catalyze the interconversion of other topological isomers of dsDNA rings, including catenanes and knotted rings. Type II topoisomerases break and join 2 DNA strands simultaneously in an ATP-dependent manner. This is DNA gyrase subunit A from Chlamydia pneumoniae (Chlamydophila pneumoniae).